The sequence spans 181 residues: MKLLVLLLCLGLTLVCVHAEEASSMERNFNVEKINGEWYTIMLATDKREKIEEHGSMRVFVEYIHVLENSLALKFHIIINEECSEIFLVADKTEKAGEYSVTYDGSNTFTILKTDYDNYIMIHLINKKDGETFQLMELYGREPDLSSDIKEKFAQLSEEHGIVRENIIDLTNANRCLEARE.

The first 19 residues, 1–19, serve as a signal peptide directing secretion; the sequence is MKLLVLLLCLGLTLVCVHA. A disulfide bridge connects residues C83 and C176.

It belongs to the calycin superfamily. Lipocalin family. Detected in urine of males but absent from female urine (at protein level).

The protein resides in the secreted. In terms of biological role, male pheromone which stimulates female sexual attraction to male urinary scent and promotes a strong learned attraction to the airborne urinary odor of an individual male. Promotes spatial learning by rapidly conditioning preference for its remembered location among females and competitor males so that animals prefer to spend time in the site even when scent is absent. In addition to promoting a rapid attraction response, also elicits ultrasonic vocalizations and urinary scent marking in females which do not occur immediately after exposure. Stimulates hippocampal neurogenesis and cell proliferation in the subventricular zone in females. Promotes male aggressive behavior. Response to Mup20 is mediated by a neural circuit extending from the accessory olfactory bulb to a subset of nitric oxidase synthase-expressing neurons in the medial amygdala. As well as acting as a pheromone itself, binds most of the male pheromone, 2-sec-butyl-4,5-dihydrothiazole, in urine and is responsible for its slow release from scent marks. In Mus musculus (Mouse), this protein is Major urinary protein 20.